The following is a 502-amino-acid chain: ATP synthase subunit alpha (502 aa).

The disordered stretch occupies residues 114–139 (PIDGRGPIETSKTRPIESPAPGVMDR). An ATP-binding site is contributed by 169 to 176 (GDRQTGKT).

The protein belongs to the ATPase alpha/beta chains family. F-type ATPases have 2 components, CF(1) - the catalytic core - and CF(0) - the membrane proton channel. CF(1) has five subunits: alpha(3), beta(3), gamma(1), delta(1), epsilon(1). CF(0) has three main subunits: a(1), b(2) and c(9-12). The alpha and beta chains form an alternating ring which encloses part of the gamma chain. CF(1) is attached to CF(0) by a central stalk formed by the gamma and epsilon chains, while a peripheral stalk is formed by the delta and b chains.

Its subcellular location is the cell membrane. It catalyses the reaction ATP + H2O + 4 H(+)(in) = ADP + phosphate + 5 H(+)(out). Produces ATP from ADP in the presence of a proton gradient across the membrane. The alpha chain is a regulatory subunit. The chain is ATP synthase subunit alpha from Halalkalibacterium halodurans (strain ATCC BAA-125 / DSM 18197 / FERM 7344 / JCM 9153 / C-125) (Bacillus halodurans).